Here is a 221-residue protein sequence, read N- to C-terminus: Ribosomal RNA large subunit methyltransferase E (221 aa).

The S-adenosyl-L-methionine site is built by Gly60, Trp62, Asp89, Asp105, and Asp134. The active-site Proton acceptor is the Lys174.

The protein belongs to the class I-like SAM-binding methyltransferase superfamily. RNA methyltransferase RlmE family.

The protein resides in the cytoplasm. It carries out the reaction uridine(2552) in 23S rRNA + S-adenosyl-L-methionine = 2'-O-methyluridine(2552) in 23S rRNA + S-adenosyl-L-homocysteine + H(+). Functionally, specifically methylates the uridine in position 2552 of 23S rRNA at the 2'-O position of the ribose in the fully assembled 50S ribosomal subunit. In Cupriavidus necator (strain ATCC 17699 / DSM 428 / KCTC 22496 / NCIMB 10442 / H16 / Stanier 337) (Ralstonia eutropha), this protein is Ribosomal RNA large subunit methyltransferase E.